A 378-amino-acid chain; its full sequence is WUSCHEL-related homeobox 9 (378 aa).

Disordered regions lie at residues 1-60 (MASS…NPKP) and 123-173 (KHSL…GSQM). Residues 32–42 (SASHRSSPFSS) show a composition bias toward low complexity. Basic and acidic residues predominate over residues 45–54 (EVERSPEPKP). Positions 51–115 (EPKPRWNPKP…NRKSRSKHKL (65 aa)) form a DNA-binding region, homeobox; WUS-type. Low complexity-rich tracts occupy residues 137–152 (PSASSSSSSSSSSSKS) and 161–171 (KNNTNLSLGGS).

This sequence belongs to the WUS homeobox family. Expressed in the basal cell and later at the boundary between suspensor and proembryo. Expressed at low levels in proliferating tissues post embryonically. Detected in vegetative shoot apical meristem, leaf primordia, floral meristems, emerging floral organs, epidermal layer of the placenta and in the upper portion of the root meristematic zone.

Its subcellular location is the nucleus. The protein localises to the cytoplasm. Homeodomain transcription factor required for meristem growth and early development. Promotes cell proliferation and prevents premature differentiation in meristematic tissues during postembryonic development. Essential for maintaining tissue growth during embryogenesis. May act by repressing TSS to promote meristematic proliferation. Involved in the transcriptional activation of a subset of cytokinin response factors. May act as a negative regulator of cytokinin signaling in the dark. The chain is WUSCHEL-related homeobox 9 from Arabidopsis thaliana (Mouse-ear cress).